The primary structure comprises 434 residues: MHPSTPISSLFSFTSPAVKRLLGWKQGDEEEKWAEKAVDSLVKKLKKKKGAMDELERALSCPGQPSKCVTIPRSLDGRLQVSHRKGLPHVIYCRVWRWPDLQSHHELKPLECCEFPFGSKQKEVCINPYHYRRVETPVLPPVLVPRHSEYNPQLSLLAKFRSASLHSEPLMPHNATYPDSFQQSLGPAPPSSPGHVFPQSPCPTSYPQSPGSPSESDSPYQHSDFRPVCYEEPLHWCSVAYYELNNRVGETFQASSRSVLIDGFTDPSNNRNRFCLGLLSNVNRNSTIENTRRHIGKGVHLYYVGGEVYAECVSDSSIFVQSRNCNYQHGFHPATVCKIPSGCSLKVFNNQLFAQLLAQLLAQSVHHGFEVVYELTKMCTIRMSFVKGWGAEYHRQDVTSTPCWIEIHLHGPLQWLDKVLTQMGSPHNPISSVS.

Residues proline 16–proline 140 form the MH1 domain. Cysteine 68, cysteine 113, cysteine 125, and histidine 130 together coordinate Zn(2+). Residues methionine 171 to histidine 222 form a disordered region. Polar residues predominate over residues cysteine 202–glutamine 221. The MH2 domain maps to tryptophan 236–serine 434.

Belongs to the dwarfin/SMAD family. Interaction with the co-SMAD SMAD4. Interacts with PEBP2-alpha subunit. Interacts with RANBP3L. In terms of processing, phosphorylated on serine by BMP (bone morphogenetic proteins) type 1 receptor kinase. Phosphorylated by activin type I receptor-like kinase-2 (ALK-2).

It is found in the cytoplasm. Its subcellular location is the nucleus. Its function is as follows. Transcriptional modulator activated by BMP (bone morphogenetic proteins) type 1 receptor kinase. SMAD9 is a receptor-regulated SMAD (R-SMAD). Has been shown to be activated by activin type I receptor-like kinase-2 (ALK-2) which stimulates heteromerization between SMAD9 and SMAD4. ALK-2 binds TGF-beta, activin and BMP. This is Mothers against decapentaplegic homolog 9 (Smad9) from Rattus norvegicus (Rat).